Consider the following 149-residue polypeptide: Protein K7 (149 aa).

It belongs to the orthopoxvirus OPG044 family. As to quaternary structure, interacts with DDX3; this interaction inhibits DDX3 and suppresses DDX3-mediated IFN-beta promoter induction. Interacts with TRAF6 and IRAK2; these interactions suppress TLR-dependent NF-KappaB activation.

It localises to the host cytoplasm. In terms of biological role, virulence factor that affects the acute immune response to infection. Bcl-2-like protein which, through its interaction with the DEAD box RNA helicase DDX3X/DDX3, prevents TBK1/IKKepsilon-mediated IRF3 activation. Contributes to virulence by binding to the host TRAF6 and IRAK2 and preventing host NF-kappa-B activation. This is Protein K7 (OPG044) from Cynomys gunnisoni (Gunnison's prairie dog).